The following is a 304-amino-acid chain: Voltage-dependent anion channel-forming protein YneE (304 aa).

4 helical membrane-spanning segments follow: residues 28–48 (LLLNFLFSIAVIFMLPWYTHL), 50–70 (IKFTLAPFSILGVAIAIFLGF), 194–214 (VLAGCERIAYTPIPFAYTLIL), and 220–240 (LFCIMLPFALVVDLHYMTPFI).

This sequence belongs to the anion channel-forming bestrophin (TC 1.A.46) family.

Its subcellular location is the cell membrane. The chain is Voltage-dependent anion channel-forming protein YneE (yneE) from Escherichia coli O157:H7.